The chain runs to 55 residues: uncharacterized protein (55 aa).

The next 2 helical transmembrane spans lie at 5 to 25 (LISIVCIAVFFCLNILGMMHM) and 26 to 46 (LPLYITSPLLFLSILFTLYRL).

It localises to the cell membrane. This is an uncharacterized protein from Bacillus subtilis (strain 168).